Reading from the N-terminus, the 501-residue chain is Cytochrome P450 71B3 (501 aa).

Residues 2–22 form a helical membrane-spanning segment; sequence SILLYFFFLPVILSLIFMKKF. Cysteine 445 lines the heme pocket.

This sequence belongs to the cytochrome P450 family. Heme is required as a cofactor.

It localises to the membrane. This is Cytochrome P450 71B3 (CYP71B3) from Arabidopsis thaliana (Mouse-ear cress).